The chain runs to 421 residues: Autophagy-related protein 17 (421 aa).

Belongs to the ATG17 family. As to quaternary structure, forms a complex with ATG13, ATG29 and CIS1/ATG31. The ATG17-ATG29-ATG31 complex interacts with the ATG1-ATG13 complex. Forms a complex with SNX4 and ATG20. Interacts with ATG11.

Its subcellular location is the cytoplasm. It is found in the preautophagosomal structure membrane. Its function is as follows. Autophagy-specific protein that functions with ATG13, ATG29, and CIS1/ATG31 in response to autophagy-inducing signals as a scaffold to recruit other ATG proteins to organize pre-autophagosomal structure (PAS) formation. Modulates the timing and magnitude of the autophagy response, such as the size of the sequestering vesicles, through interacting with and regulating ATG1 kinase activity. Plays particularly a role in pexophagy and nucleophagy. With ATG13, is required for ATG1 activation by autophosphorylation. Recruits ATG9 to the pre-autophagosomal structure. This Kluyveromyces marxianus (strain DMKU3-1042 / BCC 29191 / NBRC 104275) (Yeast) protein is Autophagy-related protein 17.